Consider the following 297-residue polypeptide: Phosphatidylinositol N-acetylglucosaminyltransferase subunit C (297 aa).

The next 4 membrane-spanning stretches (helical) occupy residues 67 to 87 (VFVV…WLFG), 88 to 108 (TGLA…GGEG), 153 to 173 (AVFM…AAIV), and 239 to 259 (ALGG…LLLI).

The protein belongs to the PIGC family. In terms of assembly, component of the glycosylphosphatidylinositol-N-acetylglucosaminyltransferase (GPI-GnT) complex composed at least by PIGA, PIGC, PIGH, PIGP, PIGQ, PIGY and DPM2. Interacts with PIGQ. Interacts with the heterodimer PIGA:PIGH.

Its subcellular location is the endoplasmic reticulum membrane. Its pathway is glycolipid biosynthesis; glycosylphosphatidylinositol-anchor biosynthesis. Functionally, part of the glycosylphosphatidylinositol-N-acetylglucosaminyltransferase (GPI-GnT) complex that catalyzes the transfer of N-acetylglucosamine from UDP-N-acetylglucosamine to phosphatidylinositol and participates in the first step of GPI biosynthesis. In Bos taurus (Bovine), this protein is Phosphatidylinositol N-acetylglucosaminyltransferase subunit C.